A 530-amino-acid polypeptide reads, in one-letter code: Bifunctional purine biosynthesis protein PurH (530 aa).

One can recognise an MGS-like domain in the interval 2 to 150 (TDHPRRVTRA…KNHDDVAVVV (149 aa)).

This sequence belongs to the PurH family.

It carries out the reaction (6R)-10-formyltetrahydrofolate + 5-amino-1-(5-phospho-beta-D-ribosyl)imidazole-4-carboxamide = 5-formamido-1-(5-phospho-D-ribosyl)imidazole-4-carboxamide + (6S)-5,6,7,8-tetrahydrofolate. It catalyses the reaction IMP + H2O = 5-formamido-1-(5-phospho-D-ribosyl)imidazole-4-carboxamide. It participates in purine metabolism; IMP biosynthesis via de novo pathway; 5-formamido-1-(5-phospho-D-ribosyl)imidazole-4-carboxamide from 5-amino-1-(5-phospho-D-ribosyl)imidazole-4-carboxamide (10-formyl THF route): step 1/1. Its pathway is purine metabolism; IMP biosynthesis via de novo pathway; IMP from 5-formamido-1-(5-phospho-D-ribosyl)imidazole-4-carboxamide: step 1/1. The sequence is that of Bifunctional purine biosynthesis protein PurH from Bradyrhizobium diazoefficiens (strain JCM 10833 / BCRC 13528 / IAM 13628 / NBRC 14792 / USDA 110).